The chain runs to 366 residues: UDP-N-acetylglucosamine--N-acetylmuramyl-(pentapeptide) pyrophosphoryl-undecaprenol N-acetylglucosamine transferase (366 aa).

Residues 10 to 12 (TGG), N124, S195, and Q295 each bind UDP-N-acetyl-alpha-D-glucosamine.

This sequence belongs to the glycosyltransferase 28 family. MurG subfamily.

It localises to the cell membrane. It catalyses the reaction di-trans,octa-cis-undecaprenyl diphospho-N-acetyl-alpha-D-muramoyl-L-alanyl-D-glutamyl-meso-2,6-diaminopimeloyl-D-alanyl-D-alanine + UDP-N-acetyl-alpha-D-glucosamine = di-trans,octa-cis-undecaprenyl diphospho-[N-acetyl-alpha-D-glucosaminyl-(1-&gt;4)]-N-acetyl-alpha-D-muramoyl-L-alanyl-D-glutamyl-meso-2,6-diaminopimeloyl-D-alanyl-D-alanine + UDP + H(+). Its pathway is cell wall biogenesis; peptidoglycan biosynthesis. Functionally, cell wall formation. Catalyzes the transfer of a GlcNAc subunit on undecaprenyl-pyrophosphoryl-MurNAc-pentapeptide (lipid intermediate I) to form undecaprenyl-pyrophosphoryl-MurNAc-(pentapeptide)GlcNAc (lipid intermediate II). The protein is UDP-N-acetylglucosamine--N-acetylmuramyl-(pentapeptide) pyrophosphoryl-undecaprenol N-acetylglucosamine transferase of Bacillus licheniformis (strain ATCC 14580 / DSM 13 / JCM 2505 / CCUG 7422 / NBRC 12200 / NCIMB 9375 / NCTC 10341 / NRRL NRS-1264 / Gibson 46).